The sequence spans 170 residues: Lipoprotein signal peptidase (170 aa).

4 consecutive transmembrane segments (helical) span residues 11-31, 41-61, 69-89, and 95-115; these read LGWL…KLHF, IVVI…AAFS, WQRW…VVWL, and NETW…GNLY. Active-site residues include aspartate 125 and aspartate 144. A helical transmembrane segment spans residues 136–156; the sequence is YFPAFNFADSAITVGAVMLAL.

The protein belongs to the peptidase A8 family.

The protein resides in the cell inner membrane. The enzyme catalyses Release of signal peptides from bacterial membrane prolipoproteins. Hydrolyzes -Xaa-Yaa-Zaa-|-(S,diacylglyceryl)Cys-, in which Xaa is hydrophobic (preferably Leu), and Yaa (Ala or Ser) and Zaa (Gly or Ala) have small, neutral side chains.. It participates in protein modification; lipoprotein biosynthesis (signal peptide cleavage). This protein specifically catalyzes the removal of signal peptides from prolipoproteins. In Pseudomonas fluorescens (strain ATCC BAA-477 / NRRL B-23932 / Pf-5), this protein is Lipoprotein signal peptidase.